The sequence spans 135 residues: Ribonuclease P protein component (135 aa).

This sequence belongs to the RnpA family. Consists of a catalytic RNA component (M1 or rnpB) and a protein subunit.

It carries out the reaction Endonucleolytic cleavage of RNA, removing 5'-extranucleotides from tRNA precursor.. In terms of biological role, RNaseP catalyzes the removal of the 5'-leader sequence from pre-tRNA to produce the mature 5'-terminus. It can also cleave other RNA substrates such as 4.5S RNA. The protein component plays an auxiliary but essential role in vivo by binding to the 5'-leader sequence and broadening the substrate specificity of the ribozyme. This chain is Ribonuclease P protein component, found in Xylella fastidiosa (strain Temecula1 / ATCC 700964).